The chain runs to 873 residues: Zinc fingers and homeoboxes protein 1 (873 aa).

T36 bears the Phosphothreonine mark. The interval 41-63 is disordered; the sequence is AKAESVSSDEEVHGSVDSDNQQN. 3 positions are modified to phosphoserine: S45, S47, and S48. Basic and acidic residues predominate over residues 50–63; sequence EEVHGSVDSDNQQN. C2H2-type zinc fingers lie at residues 70-93 and 102-125; these read YECK…DSEH and YVCV…LKYH. K159 participates in a covalent cross-link: Glycyl lysine isopeptide (Lys-Gly) (interchain with G-Cter in SUMO2). The tract at residues 198 to 247 is disordered; it reads VHHNSAEGTSEEKENGVKASQEENAESVSSSALESNTSTSTINRVHPSPA. Position 202 is a phosphoserine (S202). The segment covering 223–238 has biased composition (low complexity); it reads ESVSSSALESNTSTST. The tract at residues 272 to 432 is required for dimerization; that stretch reads NSNLLPKVLI…QTNVQKSQVP (161 aa). Residues 272 to 564 form a required for interaction with NFYA region; the sequence is NSNLLPKVLI…SQQKQSWNPF (293 aa). Residues 284–346 constitute a DNA-binding region (homeobox 1); it reads NSIPTYNAAL…LKHGVSWTPE (63 aa). A disordered region spans residues 429-456; that stretch reads SQVPAAQPATDTKPATAAVPSSPSVRPE. Residues K441 and K485 each participate in a glycyl lysine isopeptide (Lys-Gly) (interchain with G-Cter in SUMO2) cross-link. The segment at residues 464-526 is a DNA-binding region (homeobox 2); that stretch reads SFGIRAKKTK…YNQRNSKSNQ (63 aa). Disordered stretches follow at residues 541-568, 627-668, and 731-767; these read DSSD…PDFA, DEKI…CKKT, and SSSL…KRMN. The homeobox 3 DNA-binding region spans 569-630; sequence PQKFKEKTAE…KTKALKDEKI (62 aa). K629 participates in a covalent cross-link: Glycyl lysine isopeptide (Lys-Gly) (interchain with G-Cter in SUMO2). Residue S648 is modified to Phosphoserine. The homeobox 4 DNA-binding region spans 660-722; it reads GTGKICKKTP…YAWKNGNLKW (63 aa). The interval 734-768 is required for nuclear localization; the sequence is LNGLSSLRRRGRGRPKGRGRGRPRGRPRGGKRMNT. Basic residues predominate over residues 740 to 764; the sequence is LRRRGRGRPKGRGRGRPRGRPRGGK. Residue S774 is modified to Phosphoserine. The homeobox 5 DNA-binding region spans 777–832; that stretch reads KFKTGTAILKDYYLKHKFLNEQDLDELVNRSHMGYEQVREWFAERQRRSELGIELF. The segment at 829–873 is disordered; that stretch reads IELFEENEEEDEVVDDQEEDEEETDDSDTWEPPRHVKRKLSKSDD. Residues 831-857 are compositionally biased toward acidic residues; sequence LFEENEEEDEVVDDQEEDEEETDDSDT. The interval 831-873 is required for repressor activity; the sequence is LFEENEEEDEVVDDQEEDEEETDDSDTWEPPRHVKRKLSKSDD. Over residues 863 to 873 the composition is skewed to basic residues; the sequence is HVKRKLSKSDD.

Belongs to the ZHX family. As to quaternary structure, forms homodimers. Heterodimer (via HD1 domain) with ZHX2 (via HD1 domain). Also forms a heterodimer with ZHX3 which is a prerequisite for repressor activity. Interacts with ATF7IP and NFYA. Interacts (via homeobox domains) with DNMT3B (via PWWP domain). In terms of tissue distribution, widely expressed with highest levels in brain.

The protein resides in the nucleus. In terms of biological role, acts as a transcriptional repressor. Increases DNMT3B-mediated repressive transcriptional activity when DNMT3B is tethered to DNA. May link molecule between DNMT3B and other co-repressor proteins. This is Zinc fingers and homeoboxes protein 1 (Zhx1) from Mus musculus (Mouse).